Here is a 1442-residue protein sequence, read N- to C-terminus: ABC transporter G family member 35 (1442 aa).

An ABC transporter 1 domain is found at 169–442 (LGMIGIRLAK…FESFGFKCPE (274 aa)). ATP is bound at residue 202–209 (GPPSSGKT). The ABC transmembrane type-2 1 domain maps to 520–733 (ELLKSCWDKE…AFNAITVNEL (214 aa)). 7 helical membrane-spanning segments follow: residues 538-558 (FFYV…STLY), 573-593 (IYVG…LAEM), 619-639 (LPTF…WMVV), 657-677 (FLII…IAST), 683-703 (IANT…GFLL), 714-734 (WAYW…NELF), and 769-789 (IGVG…TLAL). One can recognise an ABC transporter 2 domain in the interval 840 to 1092 (MSFDDVKYFV…KVVEYFESFP (253 aa)). ATP is bound at residue 885 to 892 (GVSGAGKT). Residues 1165 to 1379 (GQFKSCLWKQ…TIYGLITSQY (215 aa)) form the ABC transmembrane type-2 2 domain. A run of 7 helical transmembrane segments spans residues 1186–1206 (LVRF…FWQI), 1218–1238 (MVIG…CSTV), 1272–1292 (LPYV…MVGF), 1299–1319 (FLWF…YGMM), 1329–1349 (VASI…GFFI), 1357–1377 (WWVW…LITS), and 1414–1434 (PVAG…AFCI).

The protein belongs to the ABC transporter superfamily. ABCG family. PDR (TC 3.A.1.205) subfamily. Ubiquitous with higher levels in roots.

The protein resides in the membrane. Functionally, may be a general defense protein. This is ABC transporter G family member 35 (ABCG35) from Arabidopsis thaliana (Mouse-ear cress).